The chain runs to 343 residues: Mitochondrial distribution and morphology protein 34 (343 aa).

Residues 1–196 enclose the SMP-LTD domain; the sequence is MSFVFPSWST…LPGIIHRLSQ (196 aa). 2 disordered regions span residues 227–255 and 300–325; these read EVEE…IGPG and GAGT…KAKR. The span at 306–317 shows a compositional bias: low complexity; it reads SGRASLASSSVG.

It belongs to the MDM34 family. In terms of assembly, component of the ER-mitochondria encounter structure (ERMES) or MDM complex, composed of MMM1, MDM10, MDM12 and MDM34.

It localises to the mitochondrion outer membrane. Its function is as follows. Component of the ERMES/MDM complex, which serves as a molecular tether to connect the endoplasmic reticulum (ER) and mitochondria. Components of this complex are involved in the control of mitochondrial shape and protein biogenesis, and function in nonvesicular lipid trafficking between the ER and mitochondria. MDM34 is required for the interaction of the ER-resident membrane protein MMM1 and the outer mitochondrial membrane-resident beta-barrel protein MDM10. The polypeptide is Mitochondrial distribution and morphology protein 34 (Cryptococcus neoformans var. neoformans serotype D (strain B-3501A) (Filobasidiella neoformans)).